A 141-amino-acid polypeptide reads, in one-letter code: ATP synthase epsilon chain (141 aa).

Belongs to the ATPase epsilon chain family. F-type ATPases have 2 components, CF(1) - the catalytic core - and CF(0) - the membrane proton channel. CF(1) has five subunits: alpha(3), beta(3), gamma(1), delta(1), epsilon(1). CF(0) has three main subunits: a, b and c.

It is found in the cell inner membrane. Its function is as follows. Produces ATP from ADP in the presence of a proton gradient across the membrane. This Desulfatibacillum aliphaticivorans protein is ATP synthase epsilon chain.